Consider the following 159-residue polypeptide: Secreted RxLR effector protein 50 (159 aa).

Positions 1–19 (MRSSTVLYVLGAAILAVNG) are cleaved as a signal peptide. Residues 38–54 (RWLRSNAMEHETDDEER) carry the RxLR-dEER motif.

This sequence belongs to the RxLR effector family.

Its subcellular location is the secreted. The protein resides in the host nucleus. The protein localises to the host cytoplasm. In terms of biological role, secreted effector that completely suppresses the host cell death induced by cell death-inducing proteins. The chain is Secreted RxLR effector protein 50 from Plasmopara viticola (Downy mildew of grapevine).